The chain runs to 370 residues: 3-isopropylmalate dehydrogenase (370 aa).

77-90 (GAKWDGVPYEARPE) lines the NAD(+) pocket. 4 residues coordinate substrate: Arg-97, Arg-107, Arg-135, and Asp-226. Mg(2+) contacts are provided by Asp-226, Asp-250, and Asp-254. 290-302 (GSAPDIAGKGLAN) serves as a coordination point for NAD(+).

This sequence belongs to the isocitrate and isopropylmalate dehydrogenases family. LeuB type 1 subfamily. As to quaternary structure, homodimer. The cofactor is Mg(2+). Mn(2+) is required as a cofactor.

The protein resides in the cytoplasm. The enzyme catalyses (2R,3S)-3-isopropylmalate + NAD(+) = 4-methyl-2-oxopentanoate + CO2 + NADH. It functions in the pathway amino-acid biosynthesis; L-leucine biosynthesis; L-leucine from 3-methyl-2-oxobutanoate: step 3/4. Catalyzes the oxidation of 3-carboxy-2-hydroxy-4-methylpentanoate (3-isopropylmalate) to 3-carboxy-4-methyl-2-oxopentanoate. The product decarboxylates to 4-methyl-2 oxopentanoate. The polypeptide is 3-isopropylmalate dehydrogenase (Rhodopseudomonas palustris (strain BisB18)).